Consider the following 198-residue polypeptide: NADH-quinone oxidoreductase subunit C (198 aa).

This sequence belongs to the complex I 30 kDa subunit family. In terms of assembly, NDH-1 is composed of 14 different subunits. Subunits NuoB, C, D, E, F, and G constitute the peripheral sector of the complex.

The protein resides in the cell inner membrane. The enzyme catalyses a quinone + NADH + 5 H(+)(in) = a quinol + NAD(+) + 4 H(+)(out). Its function is as follows. NDH-1 shuttles electrons from NADH, via FMN and iron-sulfur (Fe-S) centers, to quinones in the respiratory chain. The immediate electron acceptor for the enzyme in this species is believed to be ubiquinone. Couples the redox reaction to proton translocation (for every two electrons transferred, four hydrogen ions are translocated across the cytoplasmic membrane), and thus conserves the redox energy in a proton gradient. The polypeptide is NADH-quinone oxidoreductase subunit C (Chromobacterium violaceum (strain ATCC 12472 / DSM 30191 / JCM 1249 / CCUG 213 / NBRC 12614 / NCIMB 9131 / NCTC 9757 / MK)).